We begin with the raw amino-acid sequence, 374 residues long: MGVKGLNKLIKEHSPNAYKEYQLKNLFGRKVAIDASMCLYQFLISVRQSDGQQLTNDDGETTSHLSGIFYRTIKMVENNIKPVYVFDGKPPVLKGGELEKRLLRREEAQKQKDALKDEGTVEDHLKFEKRLVRVSREQNEEAKKLLELMGIPIVEAPCEAEAQCAELARGGKVYAAASEDMDTLCYEPPQLLRHLTFAEARKIPIDEISYKEAMAGLDMNKEQFVDLCILLGCDYCETIRGVGPVTAYKLIKEHGSLEKIVEWIEKGNTKYTVPENWPYAEARELFLNPEVKKASDISLKWKEPDVEGLIEYMVKGKGFSEDRIRSGAEKLKKGLKGGVQGRLDSFFTVVKKDDGKDKKRKSTAKDTKSKKQKK.

An N-domain region spans residues 1–105; that stretch reads MGVKGLNKLI…GELEKRLLRR (105 aa). Residue Asp-34 coordinates Mg(2+). DNA-binding residues include Arg-47 and Arg-71. Asp-87, Glu-159, Glu-161, Asp-180, and Asp-182 together coordinate Mg(2+). Residues 123-254 are I-domain; sequence DHLKFEKRLV…VTAYKLIKEH (132 aa). Glu-159 lines the DNA pocket. DNA is bound by residues Gly-232 and Asp-234. Asp-234 lines the Mg(2+) pocket. Residues 339 to 347 form an interaction with PCNA region; sequence VQGRLDSFF. Residues 353–374 form a disordered region; sequence DDGKDKKRKSTAKDTKSKKQKK.

Belongs to the XPG/RAD2 endonuclease family. FEN1 subfamily. Interacts with PCNA. Three molecules of RAD27 bind to one PCNA trimer with each molecule binding to one PCNA monomer. PCNA stimulates the nuclease activity without altering cleavage specificity. Requires Mg(2+) as cofactor. Post-translationally, phosphorylated. Phosphorylation upon DNA damage induces relocalization to the nuclear plasma.

Its subcellular location is the nucleus. The protein localises to the nucleolus. It localises to the nucleoplasm. The protein resides in the mitochondrion. Functionally, structure-specific nuclease with 5'-flap endonuclease and 5'-3' exonuclease activities involved in DNA replication and repair. During DNA replication, cleaves the 5'-overhanging flap structure that is generated by displacement synthesis when DNA polymerase encounters the 5'-end of a downstream Okazaki fragment. It enters the flap from the 5'-end and then tracks to cleave the flap base, leaving a nick for ligation. Also involved in the long patch base excision repair (LP-BER) pathway, by cleaving within the apurinic/apyrimidinic (AP) site-terminated flap. Acts as a genome stabilization factor that prevents flaps from equilibrating into structures that lead to duplications and deletions. Also possesses 5'-3' exonuclease activity on nicked or gapped double-stranded DNA, and exhibits RNase H activity. Also involved in replication and repair of rDNA and in repairing mitochondrial DNA. The chain is Flap endonuclease 1 from Candida tropicalis (strain ATCC MYA-3404 / T1) (Yeast).